The sequence spans 2100 residues: MATLPSAERRAFALKINRYSSSEIRKQFTLPPNLGQYHRHSISTSGFPSLQLPQLYEPVEPVDFEGLVMTHLNSLDAELAQELGDLTDDDLHVAFTPKECRTLQHSLPEEGVELDPHVRDCVQTYIREWLIVNRKNQGSSEFCSFKKTGSRRDFQKTLQKQTFESETLECSEPDTQTGPRHPLNVLCDVSGKGPLTSCDFDLRSLQPDERLENLLQLVSAEDFEKEKEEARKTNRPAELFALYPPVDEEDAVEIRPVPECPKEHLGNRILVKVLTLKFEIEIEPLFASIALYDVKERKKISENFHCDLNSDQFKGFLRAHTPSIDPSSQARSAVFSVTYPSSDIYLVVKIEKVLQQGEIADCAEPYMIIKESDGGKSKEKVEKLKLQAESFCQRLGKYRMPFAWAPISLASFFNISTLERESTDVEPGVGRNSVGEKRSLSQSRRPSERTLSLEENGVGSNFKATTLATNIFFKQEGDRLSDEDLFKFLADYKRSSSLQRRVKSIPGSLRLEISPAPDVMNCCLTPEMLPVKPFPENRTRPHKEILEFPIREVYVPHTVYRNLLYVYPQRLNFASKLASARNITIKIQFMCGEDPSNAMPVIFGKSSGPEFLQEVYTAITYHNKSPDFYEEVKIKLPAKLTVNHHLLFTFYHISCQQKQGASGESLLGYSWLPILLNERLQTGSYCLPVALEKLPPNYSIHSAEKVPLQNPPIKWAEGHKGVFNIEVQAVSSVHTQDNHLEKFFTLCHSLESQVSFPIRVLDQKITESTLEHELKLSIICLNSSRLEPLVLFLHLVLDKLFQLSVQPMVIAGQTANFSQFAFESVVAIANSLHNSKDLRKDQHGRNCLLASYVHYVFRLPELHRDTSKSGGPTTVVPDPRYHTYGRTSAAAVSSKLMQARVMSSSNPDLTGSHCAADEEVKNIMSSKIADRNCSRMSYYCSGNSDAPGSTAAPRPVSKKHFHEELALQMVVSTGVVRETVFKYAWFFFELLVKSMAQYVHNLDKRDSFRRTRFSDRFKDDITTIVNVVTSEIAALLVKPQKESEQAEKINISLAFFLYDLLSIMDRGFVFNLIKHYCSQLSAKLNILPTLISMRLEFLRILCSHEHYLNLNLLFMNTDTAPASPCPSISSQNSSSCSSFQDQKIASMFDLTPEYRQQHFLTGLLFTELAVALDAEGDGISRVQRKAVSAIHSLLCSHDLDPRCRKPEVKVKIAALYLPLVGIILDALPQLYDFTDARSGRSRASGSYEEQDVANGINQNVALAIAGNHFNLKTSGAMLSSLPYKQYNMLNADTTRHLMICFLWIMKNADQSLIRKWIADLPSMQLNRILDLLFICVSCFEYKGKQSSDKVSNQVLQKSRDVKAKLEEALLRGEGARGEMMRRRIPGTDRFPGINENLRWRKEQTQWRQANEKLDKTKAELDQEALISGNLATEANLIILDMQENIIQASSALDCKDSLLGGVLRVLVNSLSCDQSTTYLTHCFATLRALIAKFGDLLFEEEMEQCADLCQRVLHHCSSSMDVTRSQACATLYLLMRFSFGATSNFARVKMQVTMALASLVGKAPDFNEEHLRRSLRTILAYSEEDTAMQTTPFPMQVEELLCNLNSILYDTVKMREFQEDPEMLMDLMYRIAKSYQASPDLRLTWLQNMAEKHTKKKCFTEAAMCLVHAAALVAEYLSMLEDHSYLPVGSVSFQNISSNVLEESAVSDDTLSPDEDGVCSGRYFTESGLVGLLEQAAELFSTGGLYETVNEVYKLVIPILEAHRDFRKLTSTHDKLQKAFDNIINKDHKRMFGTYFRVGFYGSRFGDLDEQEFVYKEPAITKLPEISHRLEGFYGQCFGAEFVEVIKDSTPVDKTKLDPNKAYIQITFVEPYFDEYEMKDRVTYFEKNFNLRRFMYTTPFTLEGRPRGELHEQHRRNTVLTTMHAFPYIKTRIRVSQKEEFVLTPIEVAIEDMKKKTLQLAVATHQEPPDAKMLQMVLQGSVGATVNQGPLEVAQVFLAEIPADPKLYRHHNKLRLCFKEFIMRCGEAVEKNRRLITAEQREYQQELKKNYNKLRDSLRPMIERKIPELYKPIFRVDSQKRDSFHRSSFRKCETQLSQGS.

A phosphoserine mark is found at Ser20, Ser139, and Ser452. Residues 424-453 (DVEPGVGRNSVGEKRSLSQSRRPSERTLSL) form a disordered region. Positions 434-452 (VGEKRSLSQSRRPSERTLS) are enriched in basic and acidic residues. Positions 561–730 (RNLLYVYPQR…GVFNIEVQAV (170 aa)) constitute a C2 DOCK-type domain. Residues Ser905, Ser937, Ser1146, and Ser1244 each carry the phosphoserine modification. One can recognise a DOCKER domain in the interval 1633 to 2067 (KSYQASPDLR…LRPMIERKIP (435 aa)). At Ser2088 the chain carries Phosphoserine.

The protein belongs to the DOCK family. Interacts (via DOCKER domain) with GTPase CDC42; the interaction activates CDC42 by exchanging GDP for GTP. The unphosphorylated form interacts (via DOCKER domain) with LRCH1 (via LRR repeats); the interaction prevents the association between DOCK8 and CDC42. Interacts with CCDC88B. In response to chemokine CXCL12/SDF-1-alpha stimulation, phosphorylated by PRKCA/PKC-alpha which promotes DOCK8 dissociation from LRCH1. In terms of tissue distribution, expressed in T cells. Expressed in bone marrow-derived dendritic cells.

The protein localises to the cytoplasm. It localises to the cell membrane. The protein resides in the cell projection. It is found in the lamellipodium membrane. In terms of biological role, guanine nucleotide exchange factor (GEF) which specifically activates small GTPase CDC42 by exchanging bound GDP for free GTP. During immune responses, required for interstitial dendritic cell (DC) migration by locally activating CDC42 at the leading edge membrane of DC. Required for CD4(+) T-cell migration in response to chemokine stimulation by promoting CDC42 activation at T cell leading edge membrane. Is involved in NK cell cytotoxicity controlling polarization of microtubule-organizing center (MTOC), and possibly regulating CCDC88B-mediated lytic granule transport to MTOC during cell killing. The chain is Dedicator of cytokinesis protein 8 (Dock8) from Mus musculus (Mouse).